The following is a 127-amino-acid chain: Two-component response regulator ORR41 (127 aa).

Positions 7–125 constitute a Response regulatory domain; it reads RVLLVEDEEI…KLGVILAKFR (119 aa). A 4-aspartylphosphate modification is found at D60.

Belongs to the ARR family. Type-C subfamily. Post-translationally, two-component system major event consists of a His-to-Asp phosphorelay between a sensor histidine kinase (HK) and a response regulator (RR). In plants, the His-to-Asp phosphorelay involves an additional intermediate named Histidine-containing phosphotransfer protein (HPt). This multistep phosphorelay consists of a His-Asp-His-Asp sequential transfer of a phosphate group between first a His and an Asp of the HK protein, followed by the transfer to a conserved His of the HPt protein and finally the transfer to an Asp in the receiver domain of the RR protein.

Functions as a response regulator involved in His-to-Asp phosphorelay signal transduction system. Phosphorylation of the Asp residue in the receiver domain activates the ability of the protein to promote the transcription of target genes. May directly activate some type-A response regulators in response to cytokinins. The polypeptide is Two-component response regulator ORR41 (Oryza sativa subsp. japonica (Rice)).